The chain runs to 406 residues: Probable mannan endo-1,4-beta-mannosidase C (406 aa).

Positions 1–20 (MLINFEKVLSLALLAGSVSG) are cleaved as a signal peptide. A glycan (N-linked (GlcNAc...) asparagine) is linked at Asn-58. Trp-80 provides a ligand contact to substrate. 2 N-linked (GlcNAc...) asparagine glycosylation sites follow: Asn-86 and Asn-114. A substrate-binding site is contributed by Asn-201. Residue Glu-202 is the Proton donor of the active site. Position 287 (Tyr-287) interacts with substrate. Glu-320 functions as the Nucleophile in the catalytic mechanism. The N-linked (GlcNAc...) asparagine glycan is linked to Asn-338. Residue Trp-362 participates in substrate binding.

The protein belongs to the glycosyl hydrolase 5 (cellulase A) family.

It is found in the secreted. The catalysed reaction is Random hydrolysis of (1-&gt;4)-beta-D-mannosidic linkages in mannans, galactomannans and glucomannans.. In terms of biological role, endo-1,4-mannanase, a crucial enzyme for depolymerization of seed galactomannans and wood galactoglucomannans. The polypeptide is Probable mannan endo-1,4-beta-mannosidase C (manC) (Aspergillus terreus (strain NIH 2624 / FGSC A1156)).